The primary structure comprises 1109 residues: MILKFIIQQCVFKVAKIFSDNLIQIFMDISSVYSSSTLFFSKLSLLMCKVFNSKCAGISVLNKDGLFDTIAFCSSTQELENFSYSLKKISKNITYYDNINEIFNNSEIIKKYNLKSYMEIPLKDSKEFYFGDIVLFGDQTLNPNILDTNILTFITNRTSMEFEKKKVSDQLIIAKNLLDQSPSCSCLVSRNGKIIRKIGAFYERLLGLEIGENISSVEKSSDISTILKQVCFENNNLSTETTITKKNGEKYPAEVFVKEISDIHSNSIGIMIIVRDITDQIRLKEMNIELQKKSELEQKRNQELMEARDLALTATKIKSQFLATISHEIRTPLNGIITMGEMLLSTSPLNTEQHDIAETIFGSSELLLSITSDILDFSKIEASKLELEMIEFDFIGCLEGIGKTIGVSITNKPIEIAFLMDTDIPHRLIGDPNRLIQIMLNMGTNAVKYTDRGHIVFRISVISREQNRCKIKISIDDSGIGIGEDQRAHLFEPFHQIDSSSTRKYGGSGLGLAISSKLAKLMGGEVILERSKPGVGSLFSVTLNFEQIGSNTLKSLLPDKSFSRNKTCIILDNYEYTASIASQRFDQIFEESNIILVKESTVKKFFELVQEYKINGDVNKIDLKNLDPELLPFFDSSLICIIVFHRFMDNLDIFLKYVKDFIEFYKKKIVVALGINHKNFKNLPKRRDFLIFKKPISSTNLIKVSNMARKIIPKSSSSSNLIQTISQIDNQQQQQQQQLQQQEQEQQHQQQQLQQEQQFVTISPHSDSSEKKTTPKKDRGKYDFNISPLRIDRFGTESTSSPKIKLYSDTSSDSGESDEFEFSENLRELKSDGELVVLKNQPYKEQRLSNIQLINDPIVTPPTPKANSEVVSTKAESTFFQSSSITIKETRSDSVNSVNSVNSVNSVNSLNSENSNNSLDVGIRTRPRILLVDDNAVNRKVVKLQLKKLGYDCDTATNGFEGFEMQKKDNYELIFMDLNMPLCDGSMASKLIRSHEELNNYKSRANIVGLSATYLHGSKDYCVSMGMDDFVVKPLKLQPLGELVKKYLEVENNNNNNNNNNNNNNNNNSNNNNSNSNSNPNSNSNSNSNSNSNPNQNPNYCNNLPTDFI.

Residues 237–289 (LSTETTITKKNGEKYPAEVFVKEISDIHSNSIGIMIIVRDITDQIRLKEMNIE) form the PAC domain. Positions 324–547 (TISHEIRTPL…LFSVTLNFEQ (224 aa)) constitute a Histidine kinase domain. Position 327 is a phosphohistidine; by autocatalysis (His327). Positions 719–760 (SNLIQTISQIDNQQQQQQQQLQQQEQEQQHQQQQLQQEQQFV) form a coiled coil. Low complexity predominate over residues 739–758 (LQQQEQEQQHQQQQLQQEQQ). The interval 739-819 (LQQQEQEQQH…TSSDSGESDE (81 aa)) is disordered. The span at 767–782 (DSSEKKTTPKKDRGKY) shows a compositional bias: basic and acidic residues. The region spanning 928–1048 (RILLVDDNAV…PLGELVKKYL (121 aa)) is the Response regulatory domain. The residue at position 977 (Asp977) is a 4-aspartylphosphate. The segment covering 1052–1099 (NNNNNNNNNNNNNNNNNSNNNNSNSNSNPNSNSNSNSNSNSNPNQNPN) has biased composition (low complexity). The disordered stretch occupies residues 1052 to 1109 (NNNNNNNNNNNNNNNNNSNNNNSNSNSNPNSNSNSNSNSNSNPNQNPNYCNNLPTDFI). Residues 1100-1109 (YCNNLPTDFI) are compositionally biased toward polar residues.

It carries out the reaction ATP + protein L-histidine = ADP + protein N-phospho-L-histidine.. Functionally, acts as a receptor histidine kinase for a signal transduction pathway. This protein undergoes an ATP-dependent autophosphorylation at a conserved histidine residue in the kinase core, and a phosphoryl group is then transferred to a conserved aspartate residue in the receiver domain. This Dictyostelium discoideum (Social amoeba) protein is Hybrid signal transduction histidine kinase F (dhkF).